An 84-amino-acid polypeptide reads, in one-letter code: Xenoxin-1 (84 aa).

The first 18 residues, 1–18 (MRYAIVFFLVCVITLGEA), serve as a signal peptide directing secretion. 4 disulfide bridges follow: C21-C42, C35-C55, C61-C76, and C77-C82.

Expressed by the skin dorsal glands.

Its subcellular location is the secreted. Lacks alpha-neurotoxic activity, has apparently no antibacterial activity, nor anti-coagulant potency. This is Xenoxin-1 (xenoxin-1) from Xenopus laevis (African clawed frog).